We begin with the raw amino-acid sequence, 108 residues long: uncharacterized protein (108 aa).

An N-terminal signal peptide occupies residues 1–22; that stretch reads MMIKQCVICLSLLVFGTTAAHA.

This is an uncharacterized protein from Bacillus subtilis (strain 168).